The sequence spans 396 residues: 1-deoxy-D-xylulose 5-phosphate reductoisomerase (396 aa).

NADPH is bound by residues Thr15, Gly16, Ile18, and Asn127. Lys128 lines the 1-deoxy-D-xylulose 5-phosphate pocket. Glu129 provides a ligand contact to NADPH. Asp153 contributes to the Mn(2+) binding site. Ser154, Glu155, Ser177, and His200 together coordinate 1-deoxy-D-xylulose 5-phosphate. Mn(2+) is bound at residue Glu155. Gly206 lines the NADPH pocket. Ser213, Asn218, Lys219, and Glu222 together coordinate 1-deoxy-D-xylulose 5-phosphate. Glu222 provides a ligand contact to Mn(2+).

The protein belongs to the DXR family. Requires Mg(2+) as cofactor. Mn(2+) serves as cofactor.

The enzyme catalyses 2-C-methyl-D-erythritol 4-phosphate + NADP(+) = 1-deoxy-D-xylulose 5-phosphate + NADPH + H(+). The protein operates within isoprenoid biosynthesis; isopentenyl diphosphate biosynthesis via DXP pathway; isopentenyl diphosphate from 1-deoxy-D-xylulose 5-phosphate: step 1/6. Its function is as follows. Catalyzes the NADPH-dependent rearrangement and reduction of 1-deoxy-D-xylulose-5-phosphate (DXP) to 2-C-methyl-D-erythritol 4-phosphate (MEP). This is 1-deoxy-D-xylulose 5-phosphate reductoisomerase from Anaplasma marginale (strain Florida).